The chain runs to 125 residues: Small ribosomal subunit protein uS12m (125 aa).

The disordered stretch occupies residues 1-50 (MPSLNQLIRHGREEKRRTDRTRALDQCPQKQGVCPRVSTRTPKKPNSAPR). Over residues 10 to 23 (HGREEKRRTDRTRA) the composition is skewed to basic and acidic residues.

This sequence belongs to the universal ribosomal protein uS12 family.

It is found in the mitochondrion. Functionally, protein S12 is involved in the translation initiation step. This chain is Small ribosomal subunit protein uS12m (RPS12), found in Petunia hybrida (Petunia).